The following is a 406-amino-acid chain: Kelch domain-containing protein 2 (406 aa).

6 Kelch repeats span residues 31–85 (ERSG…NTEG), 92–136 (SGSC…ERID), 148–207 (LGVW…AWSQ), 221–259 (HACA…NELI), 271–311 (HSLT…IQFN), and 322–359 (HTAC…IFSV).

Component of a CRL2(KLHDC2) E3 ubiquitin-protein ligase complex, also named ECS(KLHDC2) complex, composed of CUL2, Elongin BC (ELOB and ELOC), RBX1 and substrate-specific adapter KLHDC2. May form oligomers as a KLHDC2-ELOB-ELOC complex; this interaction is autoinhibitory for the E3 ligase complex as the substrate-binding site of KLHDC2 is blocked in the oligomer. Interacts with CREB3; interaction is direct and specific as it does not interact with CREB1, ATF4, ATF6, JUN, FOS, CEBPA or herpes simplex virus transactivator VP16. In terms of processing, autoubiquitinated by the CRL2(KLHDC2) E3 ligase complex.

It localises to the nucleus. It functions in the pathway protein modification; protein ubiquitination. Functionally, substrate-recognition component of a Cul2-RING (CRL2) E3 ubiquitin-protein ligase complex of the DesCEND (destruction via C-end degrons) pathway, which recognizes a C-degron located at the extreme C terminus of target proteins, leading to their ubiquitination and degradation. The C-degron recognized by the DesCEND pathway is usually a motif of less than ten residues and can be present in full-length proteins, truncated proteins or proteolytically cleaved forms. The CRL2(KLHDC2) complex specifically recognizes proteins with a diglycine (Gly-Gly) at the C-terminus, leading to their ubiquitination and degradation. The CRL2(KLHDC2) complex mediates ubiquitination and degradation of truncated SELENOK and SELENOS selenoproteins produced by failed UGA/Sec decoding, which end with a diglycine. The CRL2(KLHDC2) complex also recognizes proteolytically cleaved proteins ending with Gly-Gly, such as the N-terminal fragment of USP1, leading to their degradation. May also act as an indirect repressor of CREB3-mediated transcription by interfering with CREB3-DNA-binding. This Mus musculus (Mouse) protein is Kelch domain-containing protein 2.